Here is a 302-residue protein sequence, read N- to C-terminus: Oligopeptide transport system permease protein OppC (302 aa).

At 1–38 (MMLSKKNSETLENFSEKLEVEGRSLWQDARRRFMHNRA) the chain is on the cytoplasmic side. Residues 39–59 (AVASLIVLVLIALFVILAPML) form a helical membrane-spanning segment. Residues 60–102 (SQFAYDDTDWAMMSSAPDMESGHYFGTDSSGRDLLVRVAIGGR) are Periplasmic-facing. The ABC transmembrane type-1 domain maps to 101–290 (GRISLMVGVA…VTLFCFNFIG (190 aa)). Residues 103–123 (ISLMVGVAAALVAVVVGTLYG) traverse the membrane as a helical segment. Residues 124 to 137 (SLSGYLGGKVDSVM) lie on the Cytoplasmic side of the membrane. The chain crosses the membrane as a helical span at residues 138-160 (MRLLEILNSFPFMFFVILLVTFF). Residues 161–163 (GQN) lie on the Periplasmic side of the membrane. Residues 164 to 183 (ILLIFVAIGMVSWLDMARIV) form a helical membrane-spanning segment. The Cytoplasmic portion of the chain corresponds to 184–213 (RGQTLSLKRKEFIEAAQVGGVSTSGIVIRH). The chain crosses the membrane as a helical span at residues 214–234 (IVPNVLGVVVVYASLLVPSMI). Topologically, residues 235 to 269 (LFESFLSFLGLGTQEPLSSWGALLSDGANSMEVSP) are periplasmic. The chain crosses the membrane as a helical span at residues 270 to 290 (WLLLFPAGFLVVTLFCFNFIG). At 291–302 (DGLRDALDPKDR) the chain is on the cytoplasmic side.

The protein belongs to the binding-protein-dependent transport system permease family. OppBC subfamily. The complex is composed of two ATP-binding proteins (OppD and OppF), two transmembrane proteins (OppB and OppC) and a solute-binding protein (OppA).

The protein localises to the cell inner membrane. In terms of biological role, part of the ABC transporter complex OppABCDF involved in the uptake of oligopeptides. Probably responsible for the translocation of the substrate across the membrane. This is Oligopeptide transport system permease protein OppC (oppC) from Escherichia coli O157:H7.